The chain runs to 121 residues: Fumarate reductase subunit D (121 aa).

Helical transmembrane passes span 22 to 42, 57 to 77, and 100 to 120; these read GVWFAMITPVTVLLMGILLPL, AFVSHPIGGAFTVLSLSLPMW, and YACYLAAALVTVLATVWVIQL.

Belongs to the FrdD family. In terms of assembly, part of an enzyme complex containing four subunits: a flavoprotein (FrdA), an iron-sulfur protein (FrdB), and two hydrophobic anchor proteins (FrdC and FrdD).

It localises to the cell inner membrane. Functionally, anchors the catalytic components of the fumarate reductase complex to the cell membrane, binds quinones. The sequence is that of Fumarate reductase subunit D from Shewanella putrefaciens (strain CN-32 / ATCC BAA-453).